The sequence spans 382 residues: Cysteine desulfurase IscS 1 (382 aa).

Asparagine 149 contacts pyridoxal 5'-phosphate. Cysteine 321 serves as the catalytic Cysteine persulfide intermediate. Cysteine 321 contributes to the [2Fe-2S] cluster binding site.

The protein belongs to the class-V pyridoxal-phosphate-dependent aminotransferase family. NifS/IscS subfamily. Homodimer. Forms a heterotetramer with IscU, interacts with other sulfur acceptors. Pyridoxal 5'-phosphate serves as cofactor.

The protein resides in the cytoplasm. It catalyses the reaction (sulfur carrier)-H + L-cysteine = (sulfur carrier)-SH + L-alanine. Its pathway is cofactor biosynthesis; iron-sulfur cluster biosynthesis. Functionally, master enzyme that delivers sulfur to a number of partners involved in Fe-S cluster assembly, tRNA modification or cofactor biosynthesis. Catalyzes the removal of elemental sulfur atoms from cysteine to produce alanine. Functions as a sulfur delivery protein for Fe-S cluster synthesis onto IscU, an Fe-S scaffold assembly protein, as well as other S acceptor proteins. The protein is Cysteine desulfurase IscS 1 of Archaeoglobus fulgidus (strain ATCC 49558 / DSM 4304 / JCM 9628 / NBRC 100126 / VC-16).